The chain runs to 302 residues: MNNYLILSDEVQRGMAQGLPIVALESTIISHGMPYPQNVAMAREVEQIIRDNGAVPATIAIIDGKIRIGLSDDELELFGSSKGIAKVSRRDLPQIIASKKLGATTVASTMICAHLAGIKFFVTGGLGGVHKGWETTLDISADLDELAQTSVTVICAGAKSILDLDATLEYLETKGVPVVGYKTKNLPAFFTRDSGLPLALSCEELTEIAEMIKVKWQLGLEGGVVVANPIPQEDELAPSYINGIIDTAVKEAEEKGIIGKDITPFLLGKIVEMTEGKSLEANIKLVKNNAKVGARLAVEFFK.

The active-site Proton donor is glutamate 25. Substrate is bound by residues lysine 86 and valine 106. Aspartate 138 is a Mn(2+) binding site. 140 to 142 (SAD) contributes to the substrate binding site. Catalysis depends on lysine 159, which acts as the Nucleophile.

Belongs to the pseudouridine-5'-phosphate glycosidase family. As to quaternary structure, homotrimer. It depends on Mn(2+) as a cofactor.

The enzyme catalyses D-ribose 5-phosphate + uracil = psi-UMP + H2O. Functionally, catalyzes the reversible cleavage of pseudouridine 5'-phosphate (PsiMP) to ribose 5-phosphate and uracil. Functions biologically in the cleavage direction, as part of a pseudouridine degradation pathway. This is Pseudouridine-5'-phosphate glycosidase from Glaesserella parasuis serovar 5 (strain SH0165) (Haemophilus parasuis).